The following is a 493-amino-acid chain: Mitochondrial distribution and morphology protein 10 (493 aa).

Belongs to the MDM10 family. In terms of assembly, component of the ER-mitochondria encounter structure (ERMES) or MDM complex, composed of MMM1, MDM10, MDM12 and MDM34. Associates with the mitochondrial outer membrane sorting assembly machinery SAM(core) complex, which consists of SAM35, SAM37 and SAM50, to form a SAM(holo) complex.

The protein resides in the mitochondrion outer membrane. Component of the ERMES/MDM complex, which serves as a molecular tether to connect the endoplasmic reticulum and mitochondria. Components of this complex are involved in the control of mitochondrial shape and protein biogenesis and may function in phospholipid exchange. MDM10 is involved in the late assembly steps of the general translocase of the mitochondrial outer membrane (TOM complex). Functions in the TOM40-specific route of the assembly of outer membrane beta-barrel proteins, including the association of TOM40 with the receptor TOM22 and small TOM proteins. Can associate with the SAM(core) complex as well as the MDM12-MMM1 complex, both involved in late steps of the major beta-barrel assembly pathway, that is responsible for biogenesis of all outer membrane beta-barrel proteins. May act as a switch that shuttles between both complexes and channels precursor proteins into the TOM40-specific pathway. Plays a role in mitochondrial morphology and in the inheritance of mitochondria. The protein is Mitochondrial distribution and morphology protein 10 of Saccharomyces cerevisiae (strain ATCC 204508 / S288c) (Baker's yeast).